The sequence spans 371 residues: Cytochrome b (371 aa).

Transmembrane regions (helical) follow at residues 25 to 45 (FGSM…FLAV), 69 to 90 (WMMQ…YIHI), 105 to 125 (WMSG…GYVL), and 170 to 190 (FFAL…LHII). Residues His75 and His89 each coordinate heme b. Heme b contacts are provided by His174 and His188. His193 lines the a ubiquinone pocket. The next 4 membrane-spanning stretches (helical) occupy residues 218 to 238 (HKDL…SSFF), 280 to 300 (LGGA…PFTH), 312 to 332 (LSQL…WAAT), and 339 to 358 (FIVI…LSTP).

The protein belongs to the cytochrome b family. In terms of assembly, the cytochrome bc1 complex contains 3 respiratory subunits (MT-CYB, CYC1 and UQCRFS1), 2 core proteins (UQCRC1 and UQCRC2) and probably 6 low-molecular weight proteins. Heme b serves as cofactor.

It is found in the mitochondrion inner membrane. Component of the ubiquinol-cytochrome c reductase complex (complex III or cytochrome b-c1 complex) that is part of the mitochondrial respiratory chain. The b-c1 complex mediates electron transfer from ubiquinol to cytochrome c. Contributes to the generation of a proton gradient across the mitochondrial membrane that is then used for ATP synthesis. This is Cytochrome b (MT-CYB) from Aspidites melanocephalus (Black-headed python).